A 261-amino-acid chain; its full sequence is Acetylglutamate kinase (261 aa).

Substrate is bound by residues 45–46, Arg-67, and Asn-162; that span reads GG.

This sequence belongs to the acetylglutamate kinase family. ArgB subfamily.

The protein resides in the cytoplasm. The catalysed reaction is N-acetyl-L-glutamate + ATP = N-acetyl-L-glutamyl 5-phosphate + ADP. The protein operates within amino-acid biosynthesis; L-arginine biosynthesis; N(2)-acetyl-L-ornithine from L-glutamate: step 2/4. In terms of biological role, catalyzes the ATP-dependent phosphorylation of N-acetyl-L-glutamate. This Bacteroides fragilis (strain ATCC 25285 / DSM 2151 / CCUG 4856 / JCM 11019 / LMG 10263 / NCTC 9343 / Onslow / VPI 2553 / EN-2) protein is Acetylglutamate kinase.